A 699-amino-acid chain; its full sequence is eEF1A lysine and N-terminal methyltransferase (699 aa).

M1 is modified (N-acetylmethionine). At S267 the chain carries Phosphoserine. Positions 433 to 459 (VSHKAQKKRKKDRKKQRPADAEDLPAA) are disordered. The segment covering 436-448 (KAQKKRKKDRKKQ) has biased composition (basic residues).

The protein belongs to the methyltransferase superfamily. In terms of assembly, forms a tripartite complex containing GAB1, METTL13 and SPRY2. Within the complex interacts with GAB1 and SPRY2.

The protein localises to the cytoplasm. It is found in the nucleus. Its subcellular location is the mitochondrion. The catalysed reaction is L-lysyl-[protein] + S-adenosyl-L-methionine = N(6)-methyl-L-lysyl-[protein] + S-adenosyl-L-homocysteine + H(+). It carries out the reaction N(6)-methyl-L-lysyl-[protein] + S-adenosyl-L-methionine = N(6),N(6)-dimethyl-L-lysyl-[protein] + S-adenosyl-L-homocysteine + H(+). It catalyses the reaction N-terminal glycyl-L-lysyl-L-glutamyl-[protein] + 3 S-adenosyl-L-methionine = N-terminal N,N,N-trimethyl-glycyl-L-lysyl-L-glutamyl-[protein] + 3 S-adenosyl-L-homocysteine + 3 H(+). Protein N-terminal methyltransferase activity is inhibited by GTP and GDP. In terms of biological role, dual methyltransferase that catalyzes methylation of elongation factor 1-alpha (EEF1A1 and EEF1A2) at two different positions, and is therefore involved in the regulation of mRNA translation. Via its C-terminus, methylates EEF1A1 and EEF1A2 at the N-terminal residue 'Gly-2'. Via its N-terminus dimethylates EEF1A1 and EEF1A2 at residue 'Lys-55'. Has no activity towards core histones H2A, H2B, H3 and H4. In Homo sapiens (Human), this protein is eEF1A lysine and N-terminal methyltransferase.